Here is a 1434-residue protein sequence, read N- to C-terminus: Pleiotropic drug resistance protein 1 (1434 aa).

The disordered stretch occupies residues 1–22 (MEPANLSNLRGSSLRGSTRGSL). One can recognise an ABC transporter 1 domain in the interval 161–434 (LNSLHILSSR…FESMGFKCPQ (274 aa)). 194-201 (GPPSSGKT) contacts ATP. An ABC transmembrane type-2 1 domain is found at 512-725 (ELLKVCTERE…SVNSILVNEF (214 aa)). The next 7 membrane-spanning stretches (helical) occupy residues 530–550 (FVYMFKFSQLTIMALITMTLF), 563–583 (GGIYAGALFFVVIMIMFNGMS), 618–638 (IPVTLVEVGLWVILTYYVIGF), 649–669 (FLLLIVVNQMASGMFRFIGAV), 675–695 (VASTFGSFALLLQFALGGFVL), 702–722 (SWWIWGYWISPMMYSVNSILV), and 760–780 (IGVGALVGFTVVFNFCYSLAL). The tract at residues 793–824 (LPEDGENAENGEVSSQITSTDGGDSISESQNN) is disordered. The span at 804 to 824 (EVSSQITSTDGGDSISESQNN) shows a compositional bias: polar residues. The region spanning 837–1089 (ITFDDVVYSV…HLIKYFESNP (253 aa)) is the ABC transporter 2 domain. 882 to 889 (GVSGAGKT) is an ATP binding site. The 215-residue stretch at 1162 to 1376 (TQCVACLWKQ…TLYGLVASQF (215 aa)) folds into the ABC transmembrane type-2 2 domain. The next 7 helical transmembrane spans lie at 1181–1201 (YTAVRFIFTTFIALIFGTMFW), 1221–1241 (YAAVLFLGVQNASSVQPVVAI), 1269–1289 (IPYIFVQSVFYGIIVYAMIGF), 1296–1316 (FFWYLFIMFFTLLYFTFYGMM), 1326–1346 (VASIVAAFFYGVWNLFSGFII), 1357–1377 (WYYWANPVAWTLYGLVASQFG), and 1406–1426 (VVAAVLTAYVFMFAFTFAFAI).

The protein belongs to the ABC transporter superfamily. ABCG family. PDR (TC 3.A.1.205) subfamily.

It localises to the membrane. In terms of biological role, may be a general defense protein. The chain is Pleiotropic drug resistance protein 1 (PDR1) from Nicotiana tabacum (Common tobacco).